The following is a 198-amino-acid chain: MTDLTLAALKTAPLAQVRQYLLHLLATHAYKEGDFILSSGQPSTYYINGKLVTLRAEGALAIGRLLLTELPDQVEAVAGLTLGADPIVSAVSTVSAYEEKPVVALIIRKEAKGHGTKAYIEGPELAPGTKVVVLEDVVTTGKSAMLAVERLRNAGYQVDTVISLVDRQQGGREFYQSQGLTFQALFTIGDIQQVYRQK.

5-phospho-alpha-D-ribose 1-diphosphate contacts are provided by residues Arg108, Lys109, Lys112, His114, and 135-143 (EDVVTTGKS). Orotate is bound by residues Thr139 and Arg167.

The protein belongs to the purine/pyrimidine phosphoribosyltransferase family. PyrE subfamily. Homodimer. Mg(2+) serves as cofactor.

It catalyses the reaction orotidine 5'-phosphate + diphosphate = orotate + 5-phospho-alpha-D-ribose 1-diphosphate. Its pathway is pyrimidine metabolism; UMP biosynthesis via de novo pathway; UMP from orotate: step 1/2. Its function is as follows. Catalyzes the transfer of a ribosyl phosphate group from 5-phosphoribose 1-diphosphate to orotate, leading to the formation of orotidine monophosphate (OMP). The sequence is that of Orotate phosphoribosyltransferase from Synechocystis sp. (strain ATCC 27184 / PCC 6803 / Kazusa).